A 186-amino-acid polypeptide reads, in one-letter code: Adenylate kinase (186 aa).

Residue 11 to 16 (GAGKGT) participates in ATP binding. The interval 31–60 (STGDILRAAVKNGTAMGIEAKKYMDAGDLV) is NMP. Residues Thr-32, Arg-37, 58 to 60 (DLV), 86 to 89 (GFPR), and Gln-93 contribute to the AMP site. Residues 127–137 (GRAIKEGRSDD) are LID. Arg-128 lines the ATP pocket. Residues Arg-134 and Arg-145 each contribute to the AMP site. Residue Gly-173 coordinates ATP.

This sequence belongs to the adenylate kinase family. Monomer.

It is found in the cytoplasm. The enzyme catalyses AMP + ATP = 2 ADP. Its pathway is purine metabolism; AMP biosynthesis via salvage pathway; AMP from ADP: step 1/1. Functionally, catalyzes the reversible transfer of the terminal phosphate group between ATP and AMP. Plays an important role in cellular energy homeostasis and in adenine nucleotide metabolism. This chain is Adenylate kinase, found in Leptospira biflexa serovar Patoc (strain Patoc 1 / Ames).